A 320-amino-acid chain; its full sequence is Metapyrocatechase 2 (320 aa).

Disordered regions lie at residues 1-21 and 131-153; these read MDTH…RPRH and GPKT…GQRG. VOC domains follow at residues 25-131 and 167-282; these read SIDH…VKIG and RLSH…YSAD. 3 residues coordinate Fe cation: His-170, His-227, and Glu-278.

Belongs to the extradiol ring-cleavage dioxygenase family. It depends on Fe(2+) as a cofactor.

It carries out the reaction catechol + O2 = (2Z,4E)-2-hydroxy-6-oxohexa-2,4-dienoate + H(+). The sequence is that of Metapyrocatechase 2 (mcpII) from Cupriavidus necator (Alcaligenes eutrophus).